A 127-amino-acid polypeptide reads, in one-letter code: Major sperm protein isoform beta (127 aa).

Position 2 is an N-acetylalanine (A2). The MSP domain maps to 9 to 126 (DINTQPGSKI…RRKNLPIEYN (118 aa)).

As to quaternary structure, forms filaments 10 nm wide, with a characteristic substructure repeating axially at 9 nm. In terms of tissue distribution, sperm.

Its subcellular location is the cell projection. The protein localises to the pseudopodium. The protein resides in the cytoplasm. It localises to the cytoskeleton. Functionally, central component in molecular interactions underlying sperm crawling. Forms an extensive filament system that extends from sperm villipoda, along the leading edge of the pseudopod. This is Major sperm protein isoform beta from Ascaris suum (Pig roundworm).